A 270-amino-acid chain; its full sequence is Thiazole synthase (270 aa).

The active-site Schiff-base intermediate with DXP is Lys-111. Residues Gly-172, 198 to 199 (AG), and 220 to 221 (NT) each bind 1-deoxy-D-xylulose 5-phosphate.

Belongs to the ThiG family. As to quaternary structure, homotetramer. Forms heterodimers with either ThiH or ThiS.

The protein localises to the cytoplasm. The enzyme catalyses [ThiS sulfur-carrier protein]-C-terminal-Gly-aminoethanethioate + 2-iminoacetate + 1-deoxy-D-xylulose 5-phosphate = [ThiS sulfur-carrier protein]-C-terminal Gly-Gly + 2-[(2R,5Z)-2-carboxy-4-methylthiazol-5(2H)-ylidene]ethyl phosphate + 2 H2O + H(+). The protein operates within cofactor biosynthesis; thiamine diphosphate biosynthesis. In terms of biological role, catalyzes the rearrangement of 1-deoxy-D-xylulose 5-phosphate (DXP) to produce the thiazole phosphate moiety of thiamine. Sulfur is provided by the thiocarboxylate moiety of the carrier protein ThiS. In vitro, sulfur can be provided by H(2)S. In Methylococcus capsulatus (strain ATCC 33009 / NCIMB 11132 / Bath), this protein is Thiazole synthase.